The sequence spans 181 residues: Small ribosomal subunit protein uS4 (181 aa).

In terms of domain architecture, S4 RNA-binding spans 108–177 (RRLQTMVYRQ…EGHPEIERIN (70 aa)). The interval 161 to 181 (GTSPLTSEGHPEIERINKKRR) is disordered. Residues 169-181 (GHPEIERINKKRR) are compositionally biased toward basic and acidic residues.

It belongs to the universal ribosomal protein uS4 family. As to quaternary structure, part of the 30S ribosomal subunit. Contacts protein S5. The interaction surface between S4 and S5 is involved in control of translational fidelity.

In terms of biological role, one of the primary rRNA binding proteins, it binds directly to 16S rRNA where it nucleates assembly of the body of the 30S subunit. Its function is as follows. With S5 and S12 plays an important role in translational accuracy. This chain is Small ribosomal subunit protein uS4, found in Methanosphaerula palustris (strain ATCC BAA-1556 / DSM 19958 / E1-9c).